The chain runs to 396 residues: Elongation factor Tu (396 aa).

A tr-type G domain is found at 10-206 (KPHVNVGTIG…ALDTYIPTPE (197 aa)). The tract at residues 19 to 26 (GHVDHGKT) is G1. A GTP-binding site is contributed by 19–26 (GHVDHGKT). Mg(2+) is bound at residue Thr26. Residues 60-64 (GITIN) form a G2 region. Residues 81–84 (DCPG) form a G3 region. GTP is bound by residues 81–85 (DCPGH) and 136–139 (NKCD). The G4 stretch occupies residues 136-139 (NKCD). The interval 174–176 (SAK) is G5.

It belongs to the TRAFAC class translation factor GTPase superfamily. Classic translation factor GTPase family. EF-Tu/EF-1A subfamily. Monomer.

The protein resides in the cytoplasm. It catalyses the reaction GTP + H2O = GDP + phosphate + H(+). Its function is as follows. GTP hydrolase that promotes the GTP-dependent binding of aminoacyl-tRNA to the A-site of ribosomes during protein biosynthesis. This chain is Elongation factor Tu, found in Polynucleobacter asymbioticus (strain DSM 18221 / CIP 109841 / QLW-P1DMWA-1) (Polynucleobacter necessarius subsp. asymbioticus).